A 413-amino-acid polypeptide reads, in one-letter code: Probable alpha-tubulin polyglutamylase Ttll1 (413 aa).

In terms of domain architecture, TTL spans 2-370 (ASKKLKYKTD…DDWNDDSSKT (369 aa)). Residues 184 to 187 (SRYI), Lys197, and Asp199 contribute to the ATP site.

The protein belongs to the tubulin polyglutamylase family.

The protein localises to the cytoplasm. Its subcellular location is the cytoskeleton. It localises to the cilium basal body. It is found in the contractile vacuole. Its function is as follows. Probable tubulin polyglutamylase with a strong preference for alpha-tubulin. Modifies alpha-tubulin, generating side chains of glutamate on the gamma-carboxyl groups of specific glutamate residues within the C-terminal tail of alpha-tubulin. The polypeptide is Probable alpha-tubulin polyglutamylase Ttll1 (Ttll1) (Tetrahymena thermophila (strain SB210)).